Here is a 266-residue protein sequence, read N- to C-terminus: Interleukin-33 (266 aa).

The interval methionine 1 to threonine 67 is homeodomain-like HTH domain. Residues methionine 1–phenylalanine 101 constitute a propeptide that is removed on maturation. The tract at residues proline 66 to leucine 108 is interaction with RELA.

Belongs to the IL-1 family. Highly divergent. In terms of assembly, (Microbial infection) Interacts (in reduced form) with H.polygyrus ARI; the interaction abolishes the interaction with its primary receptor IL1RL1. As to quaternary structure, forms a 1:1:1 heterotrimeric complex with its primary high-affinity receptor IL1RL1 and the coreceptor IL1RAP. Interacts with cargo receptor TMED10; the interaction mediates the translocation from the cytoplasm into the ERGIC (endoplasmic reticulum-Golgi intermediate compartment) and thereby secretion. The full-length protein can be released from cells and is able to signal via the IL1RL1/ST2 receptor. However, proteolytic processing by CELA1, CSTG/cathepsin G and ELANE/neutrophil elastase produces C-terminal peptides that are more active than the unprocessed full-length protein. May also be proteolytically processed by calpains. Proteolytic cleavage mediated by apoptotic caspases including CASP3 and CASP7 results in IL33 inactivation. In vitro proteolytic cleavage by CASP1 was reported but could not be confirmed in vivo suggesting that IL33 is probably not a direct substrate for that caspase.

It is found in the nucleus. The protein localises to the chromosome. Its subcellular location is the cytoplasm. The protein resides in the cytoplasmic vesicle. It localises to the secretory vesicle. It is found in the secreted. Functionally, cytokine that binds to and signals through the IL1RL1/ST2 receptor which in turn activates NF-kappa-B and MAPK signaling pathways in target cells. Involved in the maturation of Th2 cells inducing the secretion of T-helper type 2-associated cytokines. Also involved in activation of mast cells, basophils, eosinophils and natural killer cells. Acts as an enhancer of polarization of alternatively activated macrophages. Acts as a chemoattractant for Th2 cells, and may function as an 'alarmin', that amplifies immune responses during tissue injury. Induces rapid UCP2-dependent mitochondrial rewiring that attenuates the generation of reactive oxygen species and preserves the integrity of Krebs cycle required for persistent production of itaconate and subsequent GATA3-dependent differentiation of inflammation-resolving alternatively activated macrophages. In quiescent endothelia the uncleaved form is constitutively and abundantly expressed, and acts as a chromatin-associated nuclear factor with transcriptional repressor properties, it may sequester nuclear NF-kappaB/RELA, lowering expression of its targets. This form is rapidely lost upon angiogenic or pro-inflammatory activation. The polypeptide is Interleukin-33 (Mus musculus (Mouse)).